Reading from the N-terminus, the 163-residue chain is Nucleotide-binding protein DvMF_3058 (163 aa).

Belongs to the YajQ family.

Nucleotide-binding protein. This Nitratidesulfovibrio vulgaris (strain DSM 19637 / Miyazaki F) (Desulfovibrio vulgaris) protein is Nucleotide-binding protein DvMF_3058.